Here is a 399-residue protein sequence, read N- to C-terminus: 1-deoxy-D-xylulose 5-phosphate reductoisomerase (399 aa).

NADPH is bound by residues T11, G12, S13, I14, and N125. K126 lines the 1-deoxy-D-xylulose 5-phosphate pocket. Position 127 (E127) interacts with NADPH. Mn(2+) is bound at residue D151. 1-deoxy-D-xylulose 5-phosphate contacts are provided by S152, E153, S186, and H209. E153 is a Mn(2+) binding site. Residue G215 coordinates NADPH. The 1-deoxy-D-xylulose 5-phosphate site is built by S222, N227, K228, and E231. A Mn(2+)-binding site is contributed by E231.

It belongs to the DXR family. Mg(2+) serves as cofactor. The cofactor is Mn(2+).

The enzyme catalyses 2-C-methyl-D-erythritol 4-phosphate + NADP(+) = 1-deoxy-D-xylulose 5-phosphate + NADPH + H(+). It functions in the pathway isoprenoid biosynthesis; isopentenyl diphosphate biosynthesis via DXP pathway; isopentenyl diphosphate from 1-deoxy-D-xylulose 5-phosphate: step 1/6. Its function is as follows. Catalyzes the NADPH-dependent rearrangement and reduction of 1-deoxy-D-xylulose-5-phosphate (DXP) to 2-C-methyl-D-erythritol 4-phosphate (MEP). The sequence is that of 1-deoxy-D-xylulose 5-phosphate reductoisomerase from Acinetobacter baumannii (strain SDF).